Reading from the N-terminus, the 556-residue chain is F-box protein YDR131C (556 aa).

In terms of domain architecture, F-box spans 1-44 (MFDKLPYEIFKQIAWRIPQEDKISLTYVCKRSYESIIPFIYQNL).

Interacts with SKP1. Component of the probable SCF(YDR131C) complex containing CDC53, SKP1, RBX1 and YDR131C.

The protein resides in the vacuole. Its pathway is protein modification; protein ubiquitination. In terms of biological role, substrate recognition component of a SCF (SKP1-CUL1-F-box protein) E3 ubiquitin-protein ligase complex which mediates the ubiquitination and subsequent proteasomal degradation of target proteins. Probably recognizes and binds to phosphorylated target proteins. This Saccharomyces cerevisiae (strain ATCC 204508 / S288c) (Baker's yeast) protein is F-box protein YDR131C.